A 134-amino-acid chain; its full sequence is DNA-binding protein H-NS (134 aa).

The DNA-binding element occupies Q111–A116.

The protein belongs to the histone-like protein H-NS family. Homodimer that oligomerizes on DNA into higher-order complexes that form bridges between disparate regions of DNA compacting it. Interacts with YmoA and other similar proteins.

Its subcellular location is the cytoplasm. The protein resides in the nucleoid. Its function is as follows. A DNA-binding protein implicated in transcriptional repression and chromosome organization and compaction. Binds nucleation sites in AT-rich DNA and bridges them, forming higher-order nucleoprotein complexes and condensing the chromosome. As many horizontally transferred genes are AT-rich, it plays a central role in silencing foreign genes. A subset of genes are repressed by H-NS in association with other proteins. This Proteus vulgaris protein is DNA-binding protein H-NS (hns).